The following is a 682-amino-acid chain: Nephrocystin-1-like protein (682 aa).

Positions L10–S100 form a coiled coil. The tract at residues K96–R188 is disordered. The segment covering N128–L148 has biased composition (acidic residues). The SH3 domain occupies V215–E275.

This sequence belongs to the nephrocystin-1 family. As to expression, expressed in ciliated sensory neurons of the head (amphid neurons) and the tail in hermaphrodites (phasmid neurons) and males (sensory ray neurons).

In terms of biological role, plays a role in the extension of dendrites from phasmid ciliated sensory neurons. May be necessary for initial assembly of the cilium. The polypeptide is Nephrocystin-1-like protein (Caenorhabditis elegans).